The sequence spans 650 residues: DNA mismatch repair protein MutL (650 aa).

2 disordered regions span residues 358–392 (EASQAALPVTPQPRPALTPGHPDPPPQAQLQQPLV) and 408–448 (QPRP…QSAA). A compositionally biased stretch (pro residues) spans 367 to 384 (TPQPRPALTPGHPDPPPQ). A compositionally biased stretch (low complexity) spans 430-444 (PYAPIAAAPVPASEP).

It belongs to the DNA mismatch repair MutL/HexB family.

Functionally, this protein is involved in the repair of mismatches in DNA. It is required for dam-dependent methyl-directed DNA mismatch repair. May act as a 'molecular matchmaker', a protein that promotes the formation of a stable complex between two or more DNA-binding proteins in an ATP-dependent manner without itself being part of a final effector complex. This is DNA mismatch repair protein MutL from Geobacter sp. (strain M21).